Reading from the N-terminus, the 333-residue chain is Terminal uridylyltransferase 4 (333 aa).

UTP contacts are provided by residues Ser-54 and 65 to 68 (SDVD). Positions 66 and 68 each coordinate Mg(2+). Arg-121 provides a ligand contact to RNA. UTP contacts are provided by residues 144-148 (GVRNS), Lys-169, Lys-173, and 188-189 (SY). The PAP-associated domain maps to 237-302 (LGTQVLDFLH…WCIEDPYELN (66 aa)).

This sequence belongs to the DNA polymerase type-B-like family. Monomer. It depends on Mg(2+) as a cofactor. Requires Mn(2+) as cofactor.

The catalysed reaction is RNA(n) + UTP = RNA(n)-3'-uridine ribonucleotide + diphosphate. Its activity is regulated as follows. The 3' uridylated RNA substrate is involved in the selective incorporation of UTP; UTP binding is favored due to the constraint posed on the positioning of the NTP base by the continuous stacking interactions between Tyr-189 side chain, the bound NTP, and the terminal nucleoside base of the RNA substrate. In terms of biological role, terminal uridylyltransferase which, specifically, catalyzes the addition of Us to the 3'-hydroxyl group of single-stranded RNAs with a 3'-terminal U. This is Terminal uridylyltransferase 4 from Trypanosoma brucei brucei (strain 927/4 GUTat10.1).